The following is a 232-amino-acid chain: MGKSWKTAGKVEKAQQKGQIFTKLAREIAVAAKAGGPDPNANARLRMAIDAAKKVSCPNDTIERAIKKGAGLLDDGKVIEELTYEGYGPHGVGVIVECQTDNKHRTAPDMRHAFKSHDGNMGESGSVAWMFERVGLIEGTKEGSFDPDEEAIEAGANEVFADEGTYEFFTAADDLDAVREALTSRGWKVTKGELSYKAKNITELSDEQRKDVEEFLNYLDDMDDTHRVHATI.

It belongs to the TACO1 family.

The protein resides in the cytoplasm. The polypeptide is Probable transcriptional regulatory protein Bd1964 (Bdellovibrio bacteriovorus (strain ATCC 15356 / DSM 50701 / NCIMB 9529 / HD100)).